Reading from the N-terminus, the 395-residue chain is Elongation factor Tu (395 aa).

Positions 10-204 (KPHLNIGTIG…AVDNWIEEPV (195 aa)) constitute a tr-type G domain. Positions 19-26 (GHVDHGKT) are G1. A GTP-binding site is contributed by 19-26 (GHVDHGKT). Thr-26 provides a ligand contact to Mg(2+). Positions 60–64 (GITIN) are G2. Positions 81-84 (DCPG) are G3. GTP contacts are provided by residues 81–85 (DCPGH) and 136–139 (NKVD). The segment at 136–139 (NKVD) is G4. Positions 174–176 (SAL) are G5.

The protein belongs to the TRAFAC class translation factor GTPase superfamily. Classic translation factor GTPase family. EF-Tu/EF-1A subfamily. In terms of assembly, monomer.

It localises to the cytoplasm. It catalyses the reaction GTP + H2O = GDP + phosphate + H(+). Its function is as follows. GTP hydrolase that promotes the GTP-dependent binding of aminoacyl-tRNA to the A-site of ribosomes during protein biosynthesis. The sequence is that of Elongation factor Tu from Flavobacterium johnsoniae (strain ATCC 17061 / DSM 2064 / JCM 8514 / BCRC 14874 / CCUG 350202 / NBRC 14942 / NCIMB 11054 / UW101) (Cytophaga johnsonae).